A 208-amino-acid chain; its full sequence is MKNFLQQINSYIKEAFNAGKYLYNGLSVTFDHLRRRPVTVQYPYEKLIPSERYRGRIHYEFDKCIACEVCVRVCPINLPVVDWVMNKETKKKELRNYSIDFGVCIFCGNCVEYCPTNCLSMTEEYELATFDRHNLNFDNVALGRLPTNVTTDPSVKPLRELAYLPKGVMDPHEIPASDTRVGKLPEEVYDWMRPESNKNKDKVSNSNN.

4Fe-4S ferredoxin-type domains follow at residues 55–84 and 95–124; these read GRIH…VDWV and RNYS…MTEE. [4Fe-4S] cluster contacts are provided by cysteine 64, cysteine 67, cysteine 70, cysteine 74, cysteine 104, cysteine 107, cysteine 110, and cysteine 114.

It belongs to the complex I 23 kDa subunit family. As to quaternary structure, NDH-1 is composed of at least 11 different subunits. Requires [4Fe-4S] cluster as cofactor.

Its subcellular location is the cellular thylakoid membrane. The catalysed reaction is a plastoquinone + NADH + (n+1) H(+)(in) = a plastoquinol + NAD(+) + n H(+)(out). It carries out the reaction a plastoquinone + NADPH + (n+1) H(+)(in) = a plastoquinol + NADP(+) + n H(+)(out). NDH-1 shuttles electrons from an unknown electron donor, via FMN and iron-sulfur (Fe-S) centers, to quinones in the respiratory and/or the photosynthetic chain. The immediate electron acceptor for the enzyme in this species is believed to be plastoquinone. Couples the redox reaction to proton translocation, and thus conserves the redox energy in a proton gradient. This is NAD(P)H-quinone oxidoreductase subunit I from Prochlorococcus marinus (strain AS9601).